Consider the following 358-residue polypeptide: MYLSRLPPRSIPCRSINQISRVVARSSKSRLEFVGSYQNSLTTNQTRCLRPFSSTSRSQLRDYFPEADHEHIKKTEAAWPHPNYPKEQMLTNISYAHRTPKDFSDRIALYLVRFLRFSTDLATGYKHDPVTITENGEKVLKKPYRMSERKWLIRMVFLESVAGVPGMVAGMLRHLHSLRRLKRDNGWIETLLEEAYNERMHLLTFLKMAKPGWFMKFMIIGAQGVFFNSMFLSYLISPRTCHRFVAYLEEEAVLTYSTAIQDIEAGLLPKWTSPEFRIPDLAVQYWKIPEGNRTMRDLLLYIRADEAKHREVNHTLGNLDQNEDPNPFVSEYRDKAAPHPSKGIEHIRPTGWERNEII.

Residues 152 to 172 (LIRMVFLESVAGVPGMVAGML) form a helical membrane-spanning segment. Fe cation contacts are provided by glutamate 159, glutamate 198, and histidine 201. The chain crosses the membrane as a helical span at residues 217–237 (FMIIGAQGVFFNSMFLSYLIS). Fe cation contacts are provided by glutamate 249, glutamate 250, glutamate 306, and histidine 309.

The protein belongs to the alternative oxidase family. Fe cation is required as a cofactor.

It is found in the mitochondrion inner membrane. Its function is as follows. Catalyzes cyanide-resistant oxygen consumption. May increase respiration when the cytochrome respiratory pathway is restricted, or in response to low temperatures. This is Alternative oxidase, mitochondrial from Blumeria graminis (Powdery mildew).